A 513-amino-acid polypeptide reads, in one-letter code: Putative ribose/galactose/methyl galactoside import ATP-binding protein 2 (513 aa).

ABC transporter domains lie at 24 to 260 (LTAE…VGRE) and 270 to 510 (VPIG…VMEL). 56–63 (GENGAGKS) provides a ligand contact to ATP.

Belongs to the ABC transporter superfamily. Carbohydrate importer 2 (CUT2) (TC 3.A.1.2) family.

It is found in the cell inner membrane. The catalysed reaction is D-ribose(out) + ATP + H2O = D-ribose(in) + ADP + phosphate + H(+). The enzyme catalyses D-galactose(out) + ATP + H2O = D-galactose(in) + ADP + phosphate + H(+). In terms of biological role, part of an ABC transporter complex involved in carbohydrate import. Could be involved in ribose, galactose and/or methyl galactoside import. Responsible for energy coupling to the transport system. This chain is Putative ribose/galactose/methyl galactoside import ATP-binding protein 2, found in Rhizobium meliloti (strain 1021) (Ensifer meliloti).